Reading from the N-terminus, the 101-residue chain is Phosphoribosyl-AMP cyclohydrolase (101 aa).

Aspartate 71 lines the Mg(2+) pocket. Cysteine 72 is a binding site for Zn(2+). Mg(2+)-binding residues include aspartate 73 and aspartate 75. 2 residues coordinate Zn(2+): cysteine 88 and cysteine 95.

Belongs to the PRA-CH family. Homodimer. Requires Mg(2+) as cofactor. The cofactor is Zn(2+).

The protein localises to the cytoplasm. The enzyme catalyses 1-(5-phospho-beta-D-ribosyl)-5'-AMP + H2O = 1-(5-phospho-beta-D-ribosyl)-5-[(5-phospho-beta-D-ribosylamino)methylideneamino]imidazole-4-carboxamide. It functions in the pathway amino-acid biosynthesis; L-histidine biosynthesis; L-histidine from 5-phospho-alpha-D-ribose 1-diphosphate: step 3/9. Catalyzes the hydrolysis of the adenine ring of phosphoribosyl-AMP. In Bacillus cereus (strain ATCC 14579 / DSM 31 / CCUG 7414 / JCM 2152 / NBRC 15305 / NCIMB 9373 / NCTC 2599 / NRRL B-3711), this protein is Phosphoribosyl-AMP cyclohydrolase.